A 223-amino-acid polypeptide reads, in one-letter code: Putative NAD(P)H nitroreductase SAB2397c (223 aa).

The protein belongs to the nitroreductase family. FMN is required as a cofactor.

In Staphylococcus aureus (strain bovine RF122 / ET3-1), this protein is Putative NAD(P)H nitroreductase SAB2397c.